A 176-amino-acid polypeptide reads, in one-letter code: Vitamin K epoxide reductase complex subunit 1-like protein 1 (176 aa).

Topologically, residues 1–13 (MAAPVLLRVSVPR) are cytoplasmic. Residues 14-36 (WERVARYAVCAAGILLSIYAYHV) form a helical membrane-spanning segment. The Lumenal portion of the chain corresponds to 37 to 87 (EREKERDPEHRALCDLGPWVKCSAALASRWGRGFGLLGSIFGKDGVLNQPN). Cys-50 and Cys-58 form a disulfide bridge. Residue Asn-87 participates in (S)-warfarin binding. Residues 88–102 (SVFGLIFYILQLLLG) traverse the membrane as a helical segment. Over 103–107 (MTASA) the chain is Cytoplasmic. Residues 108–135 (VAALILMTSSIMSVVGSLYLAYILYFVL) traverse the membrane as a helical segment. The Lumenal portion of the chain corresponds to 136-138 (KEF). A disulfide bond links Cys-139 and Cys-142. Residues 139 to 160 (CIICIVTYVLNFLLLIINYKRL) traverse the membrane as a helical segment. Positions 142 and 146 each coordinate phylloquinone. Tyr-146 is a (S)-warfarin binding site. Residues 161 to 176 (VYLNEAWKRQLQPKQD) are Cytoplasmic-facing.

The protein belongs to the VKOR family.

Its subcellular location is the endoplasmic reticulum membrane. The catalysed reaction is phylloquinone + [protein]-disulfide + H2O = 2,3-epoxyphylloquinone + [protein]-dithiol. It catalyses the reaction phylloquinol + [protein]-disulfide = phylloquinone + [protein]-dithiol. Inhibited by warfarin (coumadin). Warfarin locks VKORC1 in both redox states into the closed conformation. In terms of biological role, involved in vitamin K metabolism. Can reduce inactive vitamin K 2,3-epoxide to active vitamin K, and may contribute to vitamin K-mediated protection against oxidative stress. Plays a role in vitamin K-dependent gamma-carboxylation of Glu residues in target proteins. This Homo sapiens (Human) protein is Vitamin K epoxide reductase complex subunit 1-like protein 1 (VKORC1L1).